Consider the following 593-residue polypeptide: NADH-quinone oxidoreductase subunit C/D (593 aa).

Residues 1–184 are NADH dehydrogenase I subunit C; that stretch reads MTADSVLSIP…DPYSLSAAKQ (184 aa). The segment at 208 to 593 is NADH dehydrogenase I subunit D; it reads DFMFLNLGPN…IDFVMADVDR (386 aa).

This sequence in the N-terminal section; belongs to the complex I 30 kDa subunit family. It in the C-terminal section; belongs to the complex I 49 kDa subunit family. In terms of assembly, NDH-1 is composed of 13 different subunits. Subunits NuoB, CD, E, F, and G constitute the peripheral sector of the complex.

The protein resides in the cell inner membrane. It carries out the reaction a quinone + NADH + 5 H(+)(in) = a quinol + NAD(+) + 4 H(+)(out). In terms of biological role, NDH-1 shuttles electrons from NADH, via FMN and iron-sulfur (Fe-S) centers, to quinones in the respiratory chain. The immediate electron acceptor for the enzyme in this species is believed to be ubiquinone. Couples the redox reaction to proton translocation (for every two electrons transferred, four hydrogen ions are translocated across the cytoplasmic membrane), and thus conserves the redox energy in a proton gradient. In Azotobacter vinelandii (strain DJ / ATCC BAA-1303), this protein is NADH-quinone oxidoreductase subunit C/D.